Reading from the N-terminus, the 234-residue chain is Thioredoxin-dependent peroxide reductase, mitochondrial (234 aa).

The transit peptide at 1–30 directs the protein to the mitochondrion; that stretch reads MSFVARSLIRNVPLMGKAILSQQKQIAARL. Residues 40 to 198 form the Thioredoxin domain; the sequence is VRVQQPAPDF…VLRLIKAFQF (159 aa). C85 serves as the catalytic Cysteine sulfenic acid (-SOH) intermediate.

Belongs to the peroxiredoxin family. AhpC/Prx1 subfamily. Homodimer; disulfide-linked, upon oxidation. 6 homodimers assemble to form a ring-like dodecamer. Also exists as a monomer, however the monomeric form is present at a much lower level than the homodimeric form. As to expression, expressed in thoracic flight muscles (at protein level). Detected in the head and body (at protein level).

It localises to the mitochondrion. The catalysed reaction is a hydroperoxide + [thioredoxin]-dithiol = an alcohol + [thioredoxin]-disulfide + H2O. Functionally, thiol-specific peroxidase that catalyzes the reduction of hydrogen peroxide and organic hydroperoxides to water and alcohols, respectively. Plays a role in cell protection against oxidative stress by detoxifying peroxides. May be involved in aging-associated changes in the responsiveness to oxidative stress. Involved in the maintenance of global thiol redox homeostasis. Functions in the central nervous system (CNS) and in motor neurons and is essential for normal motor function. The protein is Thioredoxin-dependent peroxide reductase, mitochondrial of Drosophila melanogaster (Fruit fly).